Consider the following 574-residue polypeptide: Golgin subfamily A member 6-like protein 4 (574 aa).

Residues 1 to 11 (MWPQPRFPPHP) are compositionally biased toward pro residues. 2 disordered regions span residues 1-77 (MWPQ…YGEG) and 491-552 (KELK…AAGG). The segment covering 51 to 62 (NGSSPDTATSGG) has biased composition (polar residues). The stretch at 157–496 (SKVEQLQDET…EQQVKELKKS (340 aa)) forms a coiled coil. The span at 491 to 504 (KELKKSGGAEEPRG) shows a compositional bias: basic and acidic residues. Over residues 508 to 523 (AAAARPVAGAPVPQGA) the composition is skewed to low complexity.

This sequence belongs to the GOLGA6 family.

The sequence is that of Golgin subfamily A member 6-like protein 4 (GOLGA6L4) from Homo sapiens (Human).